Consider the following 306-residue polypeptide: Myb family transcription factor MOF1 (306 aa).

In terms of domain architecture, HTH myb-type spans arginine 19–leucine 79. A DNA-binding region (H-T-H motif) is located at residues proline 50–arginine 75.

In terms of assembly, interacts with TPR1, TPR2 and TPR3. Expressed in roots, leaves, leaf sheaths, culms, panicles, lemmas, paleas, lodicules, stamens, and pistils.

The protein localises to the nucleus. Functionally, transcriptional repressor that plays a role in the regulation of organ identity and spikelet meristem determinacy. Interacts with the TPR corepressors to possibly repress the expression of downstream target genes. This Oryza sativa subsp. japonica (Rice) protein is Myb family transcription factor MOF1.